The chain runs to 664 residues: Degenerin del-1 (664 aa).

Residues 1–67 (MARKYIDILK…IFTTSLYWVR (67 aa)) lie on the Cytoplasmic side of the membrane. A helical transmembrane segment spans residues 68–88 (FLWVVVSLVCICLCMYSFSHV). Residues 89-607 (KDKYDRKEKI…WFNLMADMGG (519 aa)) lie on the Extracellular side of the membrane. N-linked (GlcNAc...) asparagine glycans are attached at residues N241, N300, N394, N508, and N562. The chain crosses the membrane as a helical span at residues 608-628 (QAGLFLGASIMSVIEFLFFAV). Residues 629–664 (RTLGIACKPRRWRQKTELLRAEELNDAEKGVSTNNN) are Cytoplasmic-facing.

The protein belongs to the amiloride-sensitive sodium channel (TC 1.A.6) family.

The protein localises to the membrane. In terms of biological role, probable sodium channel subunit. The polypeptide is Degenerin del-1 (del-1) (Caenorhabditis elegans).